Consider the following 153-residue polypeptide: Aspartate carbamoyltransferase regulatory chain (153 aa).

Zn(2+)-binding residues include Cys109, Cys114, Cys138, and Cys141.

This sequence belongs to the PyrI family. In terms of assembly, contains catalytic and regulatory chains. Zn(2+) serves as cofactor.

Involved in allosteric regulation of aspartate carbamoyltransferase. The chain is Aspartate carbamoyltransferase regulatory chain from Vibrio parahaemolyticus serotype O3:K6 (strain RIMD 2210633).